Consider the following 453-residue polypeptide: Adenosylmethionine-8-amino-7-oxononanoate aminotransferase (453 aa).

118–119 (GS) lines the pyridoxal 5'-phosphate pocket. Residue Y151 coordinates substrate. Position 258 (D258) interacts with pyridoxal 5'-phosphate. Positions 287, 322, and 417 each coordinate substrate. N6-(pyridoxal phosphate)lysine is present on K287.

The protein belongs to the class-III pyridoxal-phosphate-dependent aminotransferase family. BioA subfamily. As to quaternary structure, homodimer. It depends on pyridoxal 5'-phosphate as a cofactor.

Its subcellular location is the cytoplasm. It catalyses the reaction (8S)-8-amino-7-oxononanoate + S-adenosyl-L-methionine = S-adenosyl-4-methylsulfanyl-2-oxobutanoate + (7R,8S)-7,8-diammoniononanoate. Its pathway is cofactor biosynthesis; biotin biosynthesis; 7,8-diaminononanoate from 8-amino-7-oxononanoate (SAM route): step 1/1. Its function is as follows. Catalyzes the transfer of the alpha-amino group from S-adenosyl-L-methionine (SAM) to 7-keto-8-aminopelargonic acid (KAPA) to form 7,8-diaminopelargonic acid (DAPA). It is the only aminotransferase known to utilize SAM as an amino donor. This chain is Adenosylmethionine-8-amino-7-oxononanoate aminotransferase, found in Geobacter sulfurreducens (strain ATCC 51573 / DSM 12127 / PCA).